We begin with the raw amino-acid sequence, 311 residues long: Energy-coupling factor transporter ATP-binding protein EcfA (311 aa).

The 236-residue stretch at 2 to 237 folds into the ABC transporter domain; the sequence is IELRDLSYSY…AELIRRASLR (236 aa). Residue 35–42 coordinates ATP; that stretch reads GPNGAGKS.

It belongs to the ABC transporter superfamily. Energy-coupling factor EcfA family. As to quaternary structure, forms a stable energy-coupling factor (ECF) transporter complex composed of 2 membrane-embedded substrate-binding proteins (S component), 2 ATP-binding proteins (A component) and 2 transmembrane proteins (T component).

The protein resides in the cell membrane. ATP-binding (A) component of a common energy-coupling factor (ECF) ABC-transporter complex. Unlike classic ABC transporters this ECF transporter provides the energy necessary to transport a number of different substrates. The chain is Energy-coupling factor transporter ATP-binding protein EcfA from Methanothermobacter thermautotrophicus (strain ATCC 29096 / DSM 1053 / JCM 10044 / NBRC 100330 / Delta H) (Methanobacterium thermoautotrophicum).